Consider the following 101-residue polypeptide: Conopressin/conophysin, isoform 3 (101 aa).

Alanine 1 is a signal peptide. Cysteine 2 and cysteine 7 are disulfide-bonded. Glycine amide is present on glycine 10. A propeptide spanning residues 11 to 18 is cleaved from the precursor; it reads GKRNVDEG. Disulfide bonds link cysteine 23–cysteine 63, cysteine 26–cysteine 37, cysteine 31–cysteine 53, cysteine 38–cysteine 43, cysteine 70–cysteine 88, cysteine 82–cysteine 100, and cysteine 89–cysteine 94.

Belongs to the vasopressin/oxytocin family. As to expression, expressed by the venom gland.

It is found in the secreted. Targets vasopressin-oxytocin related receptors. Is more active on fish receptors than on their human counterparts, supporting an evolved role of this conopressin in the envenomation process. Acts as an agonist on zebrafish vasopressin receptors V1a1R (EC(50)=10.6 nM), V1a2R (EC(50)=44.06 nM, partial agonist), V2R (EC(50)=299.2 nM) and oxytocin receptor (EC(50)=353.73 nM, partial agonist). Shows a weaker activity on human receptors AVPR1B (EC(50)=51.92 nM), AVPR1A (EC(50)=123.78 nM), AVPR2 (EC(50)=299.2 nM) and oxytocin (OXTR) receptor (EC(50)=455.66 nM, partial agonist). In vivo, exhibits grooming and scratching behavior in mice, following intracerebral injection. The chain is Conopressin/conophysin, isoform 3 from Conus monile (Necklace cone).